The sequence spans 261 residues: tRNA pseudouridine synthase A (261 aa).

Aspartate 51 (nucleophile) is an active-site residue. Residue tyrosine 109 coordinates substrate.

It belongs to the tRNA pseudouridine synthase TruA family. As to quaternary structure, homodimer.

It carries out the reaction uridine(38/39/40) in tRNA = pseudouridine(38/39/40) in tRNA. Formation of pseudouridine at positions 38, 39 and 40 in the anticodon stem and loop of transfer RNAs. The chain is tRNA pseudouridine synthase A from Shewanella pealeana (strain ATCC 700345 / ANG-SQ1).